The chain runs to 338 residues: GTPase Obg (338 aa).

An Obg domain is found at 1–159 (MQFIDEVKIH…RWLRLELKLL (159 aa)). The 172-residue stretch at 160-331 (ADVGLLGFPN…LLDEIARSLW (172 aa)) folds into the OBG-type G domain. GTP-binding positions include 166–173 (GFPNVGKS), 191–195 (FTTLK), 213–216 (DIPG), 283–286 (NKMD), and 312–314 (SAA). Residues S173 and T193 each coordinate Mg(2+).

The protein belongs to the TRAFAC class OBG-HflX-like GTPase superfamily. OBG GTPase family. In terms of assembly, monomer. It depends on Mg(2+) as a cofactor.

Its subcellular location is the cytoplasm. Its function is as follows. An essential GTPase which binds GTP, GDP and possibly (p)ppGpp with moderate affinity, with high nucleotide exchange rates and a fairly low GTP hydrolysis rate. Plays a role in control of the cell cycle, stress response, ribosome biogenesis and in those bacteria that undergo differentiation, in morphogenesis control. This is GTPase Obg from Geobacter sulfurreducens (strain ATCC 51573 / DSM 12127 / PCA).